We begin with the raw amino-acid sequence, 93 residues long: Putative regulatory protein Amet_2791 (93 aa).

The protein belongs to the RemA family.

This chain is Putative regulatory protein Amet_2791, found in Alkaliphilus metalliredigens (strain QYMF).